Reading from the N-terminus, the 181-residue chain is Acireductone dioxygenase (181 aa).

Residues His-97, His-99, Glu-103, and His-141 each contribute to the Fe(2+) site. Ni(2+)-binding residues include His-97, His-99, Glu-103, and His-141.

This sequence belongs to the acireductone dioxygenase (ARD) family. In terms of assembly, monomer. Requires Fe(2+) as cofactor. Ni(2+) serves as cofactor.

It catalyses the reaction 1,2-dihydroxy-5-(methylsulfanyl)pent-1-en-3-one + O2 = 3-(methylsulfanyl)propanoate + CO + formate + 2 H(+). The enzyme catalyses 1,2-dihydroxy-5-(methylsulfanyl)pent-1-en-3-one + O2 = 4-methylsulfanyl-2-oxobutanoate + formate + 2 H(+). The protein operates within amino-acid biosynthesis; L-methionine biosynthesis via salvage pathway; L-methionine from S-methyl-5-thio-alpha-D-ribose 1-phosphate: step 5/6. In terms of biological role, catalyzes 2 different reactions between oxygen and the acireductone 1,2-dihydroxy-3-keto-5-methylthiopentene (DHK-MTPene) depending upon the metal bound in the active site. Fe-containing acireductone dioxygenase (Fe-ARD) produces formate and 2-keto-4-methylthiobutyrate (KMTB), the alpha-ketoacid precursor of methionine in the methionine recycle pathway. Ni-containing acireductone dioxygenase (Ni-ARD) produces methylthiopropionate, carbon monoxide and formate, and does not lie on the methionine recycle pathway. This is Acireductone dioxygenase from Pseudomonas savastanoi pv. phaseolicola (strain 1448A / Race 6) (Pseudomonas syringae pv. phaseolicola (strain 1448A / Race 6)).